The chain runs to 140 residues: Large ribosomal subunit protein uL11 (140 aa).

This sequence belongs to the universal ribosomal protein uL11 family. As to quaternary structure, part of the ribosomal stalk of the 50S ribosomal subunit. Interacts with L10 and the large rRNA to form the base of the stalk. L10 forms an elongated spine to which L12 dimers bind in a sequential fashion forming a multimeric L10(L12)X complex. Post-translationally, one or more lysine residues are methylated.

Functionally, forms part of the ribosomal stalk which helps the ribosome interact with GTP-bound translation factors. This chain is Large ribosomal subunit protein uL11, found in Staphylococcus aureus (strain Mu3 / ATCC 700698).